The primary structure comprises 754 residues: 1,4-alpha-glucan branching enzyme GlgB (754 aa).

The Nucleophile role is filled by Asp-431. Glu-484 serves as the catalytic Proton donor.

The protein belongs to the glycosyl hydrolase 13 family. GlgB subfamily. Monomer.

It catalyses the reaction Transfers a segment of a (1-&gt;4)-alpha-D-glucan chain to a primary hydroxy group in a similar glucan chain.. It functions in the pathway glycan biosynthesis; glycogen biosynthesis. In terms of biological role, catalyzes the formation of the alpha-1,6-glucosidic linkages in glycogen by scission of a 1,4-alpha-linked oligosaccharide from growing alpha-1,4-glucan chains and the subsequent attachment of the oligosaccharide to the alpha-1,6 position. The protein is 1,4-alpha-glucan branching enzyme GlgB of Prochlorococcus marinus (strain MIT 9301).